A 993-amino-acid polypeptide reads, in one-letter code: MCDDGAVCAATAAANADDKSLLARFYHADRSLTAVASELDSFDGRAEPDRCSRLVSRLRQNQDKVLAITNLIMEELLGEDRDPRAFRAKFPEEVLQENLAGQLWFGAECLAAGSSILNRETESKEMRPLAQAVTKSLGNVRVLLRDQCLRNNVPNSKTLHLDFNDCTTEQLYESLKIFDRLFAEFELSYVSAMVQVKSRHEYEMQQWIGVLFSETLQRALKMGLLDQEMVDAFDPGLMFSIPRLAIVAGLVVYNKGPLNMDMPGDQLSEMFRPFRTILIKIRDLLRNLNQQELYQLEKLLCTNEDINTKAPLGSSSIEAPSQQDYSTANTHRTLERLTVDQRNNNNNINNNSSSSSNSNSGAPSVQEDANHRSPSMLSLSTASPTPSHSIGSTFSAATSSTNPPVNWSDGDDADDDDDGDDDDEDDDDDVDDDLVGNDDSDDDDDDTTDEHLLDDIVAADCASGYLIPNTNLGNLLQPQQVTLTDNFVASDDDDGYGQVAAGAGNDEEPSTSAATRHMQRLHLPSSDSYGDADGSHNNTTTIKSPDSDGQQQHQQHTSSRQRHSHHHHRHHHHHHRHSSHSSHSHHHQHQQHHSQPHPHRTTRSGRKRCSLESPTDVDVTVVQPEPEPELVSASADNSTASSLSDDISLAMRNTTARLKFKSTENLLHRLFVCIAGVADQLQTNFASDLRQILRSVFLMNVSSSQEEIDDIPEKTKESELFEFRASENDVIQESAGSNQSIYSAEEVNPELDNVFSASGARHSAGASMQRNHTTIDNNNSTSSSPPDATITTTTTTTTTRSHVTRSRSLGDQEVVASAAAAAAAAVNEEREMQRQRNNSVGSNTPSSASSSATSSSSEQNSPVSMRSGTGRRRHQSNNETQMPTTATTTTTTGTGTLAPPAWIPDGKAPRCMSCQTPFTAFRRRHHCRNCGGVFCGVCSNASAPLPKYGLTKAVRVCRDCYAREIRSSGGGGGGVVQMQRQQAANRPQTASAS.

Disordered stretches follow at residues 340 to 449, 494 to 623, 759 to 813, and 825 to 902; these read DQRN…DTTD, DGYG…TVVQ, GARH…GDQE, and AVNE…PPAW. Positions 343 to 360 are enriched in low complexity; sequence NNNNNINNNSSSSSNSNS. Residues 372 to 405 show a composition bias toward polar residues; it reads RSPSMLSLSTASPTPSHSIGSTFSAATSSTNPPV. A compositionally biased stretch (acidic residues) spans 409–448; sequence DGDDADDDDDGDDDDEDDDDDVDDDLVGNDDSDDDDDDTT. A phosphoserine mark is found at S525 and S526. Residues 535–549 are compositionally biased toward polar residues; sequence SHNNTTTIKSPDSDG. Residues 559–608 show a composition bias toward basic residues; it reads SRQRHSHHHHRHHHHHHRHSSHSSHSHHHQHQQHHSQPHPHRTTRSGRKR. A compositionally biased stretch (low complexity) spans 759-801; that stretch reads GARHSAGASMQRNHTTIDNNNSTSSSPPDATITTTTTTTTTRS. A Phosphoserine modification is found at S808. Composition is skewed to low complexity over residues 842–862 and 884–896; these read SNTP…QNSP and TTAT…GTGT. The FYVE-type zinc finger occupies 905 to 965; that stretch reads DGKAPRCMSC…VCRDCYAREI (61 aa). Residues C911, C914, C927, C930, C935, C938, C957, and C960 each coordinate Zn(2+). The tract at residues 968 to 993 is disordered; sequence SGGGGGGVVQMQRQQAANRPQTASAS. The segment covering 978-993 has biased composition (polar residues); the sequence is MQRQQAANRPQTASAS.

It belongs to the lst-2 family.

Negative regulator of epidermal growth factor receptor (EGFR) signaling. In Drosophila willistoni (Fruit fly), this protein is Lateral signaling target protein 2 homolog.